Here is a 267-residue protein sequence, read N- to C-terminus: Phosphate import ATP-binding protein PstB (267 aa).

The ABC transporter domain maps to 21 to 262 (VAARNLDFYY…PSKQQTEDYI (242 aa)). 53 to 60 (GPSGCGKS) lines the ATP pocket.

The protein belongs to the ABC transporter superfamily. Phosphate importer (TC 3.A.1.7) family. The complex is composed of two ATP-binding proteins (PstB), two transmembrane proteins (PstC and PstA) and a solute-binding protein (PstS).

It localises to the cell inner membrane. It carries out the reaction phosphate(out) + ATP + H2O = ADP + 2 phosphate(in) + H(+). Its function is as follows. Part of the ABC transporter complex PstSACB involved in phosphate import. Responsible for energy coupling to the transport system. The protein is Phosphate import ATP-binding protein PstB of Xanthomonas campestris pv. campestris (strain 8004).